Here is a 167-residue protein sequence, read N- to C-terminus: Fluoride-specific ion channel FluC (167 aa).

Helical transmembrane passes span 32–52 (HVTP…GALA), 69–89 (IGTL…IAYV), 102–122 (FMIT…AELF), and 137–157 (LGLH…TIGL). Residues G109 and S112 each coordinate Na(+).

It belongs to the fluoride channel Fluc/FEX (TC 1.A.43) family.

Its subcellular location is the cell inner membrane. It catalyses the reaction fluoride(in) = fluoride(out). Na(+) is not transported, but it plays an essential structural role and its presence is essential for fluoride channel function. Fluoride-specific ion channel. Important for reducing fluoride concentration in the cell, thus reducing its toxicity. The sequence is that of Fluoride-specific ion channel FluC from Xanthomonas oryzae pv. oryzae (strain KACC10331 / KXO85).